A 303-amino-acid polypeptide reads, in one-letter code: HTH-type transcriptional regulator LinR (303 aa).

Residues 6-63 (LDFRHLVLLDALLKRHSVSAAARELDLPQPTASHGLARLRKALGDPLLVRARDGMEPT) enclose the HTH lysR-type domain. Positions 23 to 42 (VSAAARELDLPQPTASHGLA) form a DNA-binding region, H-T-H motif.

Belongs to the LysR transcriptional regulatory family.

Its function is as follows. Positively regulates the transcription of the linD and linE genes that are involved in gamma-hexachlorocyclohexane (gamma-HCH or lindane) degradation. This degradation pathway allows S.japonicum UT26 to grow on gamma-HCH as the sole source of carbon and energy. The protein is HTH-type transcriptional regulator LinR (linR) of Sphingobium indicum (strain DSM 16413 / CCM 7287 / MTCC 6362 / UT26 / NBRC 101211 / UT26S) (Sphingobium japonicum).